The following is a 90-amino-acid chain: Putative membrane protein insertion efficiency factor (90 aa).

Belongs to the UPF0161 family.

It localises to the cell inner membrane. In terms of biological role, could be involved in insertion of integral membrane proteins into the membrane. This Bordetella bronchiseptica (strain ATCC BAA-588 / NCTC 13252 / RB50) (Alcaligenes bronchisepticus) protein is Putative membrane protein insertion efficiency factor.